Here is a 201-residue protein sequence, read N- to C-terminus: CASP-like protein 2B2 (201 aa).

The Cytoplasmic segment spans residues 1 to 28 (MSYLGVGVSPGNVSGSTTKMKLIDRKVR). A helical transmembrane segment spans residues 29-49 (VTELILRCLVCVLALVAAILI). Residues 50–71 (ATDVQVREIFMIQKKAKFTDMK) lie on the Extracellular side of the membrane. Residues 72–92 (ALVLLVVVNGIAAGYSLVQAV) form a helical membrane-spanning segment. Topologically, residues 93–108 (RCVVGLMKGRVLFSKP) are cytoplasmic. A helical membrane pass occupies residues 109 to 129 (LAWAIFFGDQAVAYLCVAGVA). Topologically, residues 130-166 (AAAQSAAFAKLGEPELQWMKICNMYGKFCNQVGEGIA) are extracellular. A helical membrane pass occupies residues 167–187 (SALFACIGMVLISCISAFGVF). The Cytoplasmic portion of the chain corresponds to 188-201 (RLYGGSKSRPSSRW).

This sequence belongs to the Casparian strip membrane proteins (CASP) family. In terms of assembly, homodimer and heterodimers.

The protein localises to the cell membrane. This Arabidopsis thaliana (Mouse-ear cress) protein is CASP-like protein 2B2.